The following is a 160-amino-acid chain: Transcription antitermination protein NusB (160 aa).

Belongs to the NusB family.

Involved in transcription antitermination. Required for transcription of ribosomal RNA (rRNA) genes. Binds specifically to the boxA antiterminator sequence of the ribosomal RNA (rrn) operons. The polypeptide is Transcription antitermination protein NusB (Rhizobium rhizogenes (strain K84 / ATCC BAA-868) (Agrobacterium radiobacter)).